The primary structure comprises 542 residues: Organic anion transporter 3 (542 aa).

Residues 1-20 (MTFSEILDRVGSMGRFQFLH) lie on the Cytoplasmic side of the membrane. The residue at position 4 (Ser4) is a Phosphoserine. The helical transmembrane segment at 21 to 41 (VAILGLPILNMANHNLLQIFT) threads the bilayer. Residues 42–123 (AATPVHHCRP…LVCNSNKLKE (82 aa)) are Extracellular-facing. N-linked (GlcNAc...) asparagine glycosylation occurs at Asn86. The helical transmembrane segment at 124-144 (MAQSIFMAGILIGGLVLGDLS) threads the bilayer. The Cytoplasmic portion of the chain corresponds to 145–154 (DRFGRRPILT). A helical transmembrane segment spans residues 155-175 (CSYLLLAASGSGAAFSPTFPI). Residue Tyr176 is a topological domain, extracellular. A helical membrane pass occupies residues 177–197 (MVFRFLCGFGISGITLSTVIL). Topologically, residues 198–212 (NVEWVPTRMRAIMST) are cytoplasmic. Residues 213–233 (ALGYCYTFGQFILPGLAYAIP) traverse the membrane as a helical segment. Residues 234–236 (QWR) are Extracellular-facing. A helical membrane pass occupies residues 237–257 (WLQLTVSIPFFIFFLSSWWTP). Topologically, residues 258 to 327 (ESIRWLVLSG…FRIPMLRRMT (70 aa)) are cytoplasmic. The helical transmembrane segment at 328 to 348 (FCLSLAWFATGFAYYSLAMGV) threads the bilayer. The Extracellular segment spans residues 349 to 354 (EEFGVN). Residues 355–375 (LYILQIIFGGVDVPAKFITIL) form a helical membrane-spanning segment. Residues 376-386 (SLSYLGRHTTQ) are Cytoplasmic-facing. Residues 387-407 (AAALLLAGGAILALTFVPLDL) form a helical membrane-spanning segment. Residues 408–471 (QTVRTVLAVF…LVKITGEVQP (64 aa)) are Extracellular-facing. The chain crosses the membrane as a helical span at residues 472 to 492 (FIPNIIYGITALLGGSAAFFL). The Cytoplasmic portion of the chain corresponds to 493–542 (PETLNQPLPETIEDLENWSLRAKKPKQEPEVEKASQRIPLQPHGPGLGSS). The segment at 515–542 (KKPKQEPEVEKASQRIPLQPHGPGLGSS) is disordered. Positions 517–527 (PKQEPEVEKAS) are enriched in basic and acidic residues.

This sequence belongs to the major facilitator (TC 2.A.1) superfamily. Organic cation transporter (TC 2.A.1.19) family.

The protein localises to the basolateral cell membrane. The enzyme catalyses estrone 3-sulfate(out) + glutarate(in) = estrone 3-sulfate(in) + glutarate(out). It carries out the reaction estrone 3-sulfate(in) + 2-oxoglutarate(out) = estrone 3-sulfate(out) + 2-oxoglutarate(in). The catalysed reaction is glutarate(in) + 2-oxoglutarate(out) = glutarate(out) + 2-oxoglutarate(in). It catalyses the reaction urate(in) + 2-oxoglutarate(out) = urate(out) + 2-oxoglutarate(in). The enzyme catalyses taurocholate(out) + glutarate(in) = taurocholate(in) + glutarate(out). It carries out the reaction dehydroepiandrosterone 3-sulfate(out) + glutarate(in) = dehydroepiandrosterone 3-sulfate(in) + glutarate(out). The catalysed reaction is prostaglandin F2alpha(out) + glutarate(in) = prostaglandin F2alpha(in) + glutarate(out). It catalyses the reaction prostaglandin F2alpha(out) + 2-oxoglutarate(in) = prostaglandin F2alpha(in) + 2-oxoglutarate(out). The enzyme catalyses (R)-carnitine(out) + 2-oxoglutarate(in) = (R)-carnitine(in) + 2-oxoglutarate(out). It carries out the reaction glutarate(in) + (R)-carnitine(out) = glutarate(out) + (R)-carnitine(in). The catalysed reaction is prostaglandin E2(out) + 2-oxoglutarate(in) = prostaglandin E2(in) + 2-oxoglutarate(out). It catalyses the reaction prostaglandin E2(out) + glutarate(in) = prostaglandin E2(in) + glutarate(out). The enzyme catalyses urate(in) + glutarate(out) = urate(out) + glutarate(in). It carries out the reaction taurocholate(out) + 2-oxoglutarate(in) = taurocholate(in) + 2-oxoglutarate(out). The catalysed reaction is dehydroepiandrosterone 3-sulfate(out) + 2-oxoglutarate(in) = dehydroepiandrosterone 3-sulfate(in) + 2-oxoglutarate(out). It catalyses the reaction kynurenate(out) + a dicarboxylate(in) = kynurenate(in) + a dicarboxylate(out). The enzyme catalyses (indol-3-yl)acetate(out) + a dicarboxylate(in) = (indol-3-yl)acetate(in) + a dicarboxylate(out). It carries out the reaction indoxyl sulfate(out) + a dicarboxylate(in) = indoxyl sulfate(in) + a dicarboxylate(out). The catalysed reaction is N-benzoylglycine(out) + a dicarboxylate(in) = N-benzoylglycine(in) + a dicarboxylate(out). It catalyses the reaction 3-carboxy-4-methyl-5-propyl-2-furanpropanoate(out) + a dicarboxylate(in) = 3-carboxy-4-methyl-5-propyl-2-furanpropanoate(in) + a dicarboxylate(out). The enzyme catalyses (6R)-L-erythro-5,6,7,8-tetrahydrobiopterin(out) + a dicarboxylate(in) = (6R)-L-erythro-5,6,7,8-tetrahydrobiopterin(in) + a dicarboxylate(out). It carries out the reaction L-erythro-7,8-dihydrobiopterin(out) + a dicarboxylate(in) = L-erythro-7,8-dihydrobiopterin(in) + a dicarboxylate(out). The catalysed reaction is L-sepiapterin(out) + a dicarboxylate(in) = L-sepiapterin(in) + a dicarboxylate(out). In terms of biological role, functions as an organic anion/dicarboxylate exchanger that couples organic anion uptake indirectly to the sodium gradient. Transports organic anions such as estrone 3-sulfate (E1S) and urate in exchange for dicarboxylates such as glutarate or ketoglutarate (2-oxoglutarate). Plays an important role in the excretion of endogenous and exogenous organic anions, especially from the kidney and the brain. E1S transport is pH- and chloride-dependent and may also involve E1S/cGMP exchange. Responsible for the transport of prostaglandin E2 (PGE2) and prostaglandin F2(alpha) (PGF2(alpha)) in the basolateral side of the renal tubule. Involved in the transport of neuroactive tryptophan metabolites kynurenate and xanthurenate. Functions as a biopterin transporters involved in the uptake and the secretion of coenzymes tetrahydrobiopterin (BH4), dihydrobiopterin (BH2) and sepiapterin to urine, thereby determining baseline levels of blood biopterins. May be involved in the basolateral transport of steviol, a metabolite of the popular sugar substitute stevioside. May participate in the detoxification/ renal excretion of drugs and xenobiotics, such as the histamine H(2)-receptor antagonists fexofenadine and cimetidine, the antibiotic benzylpenicillin (PCG), the anionic herbicide 2,4-dichloro-phenoxyacetate (2,4-D), the diagnostic agent p-aminohippurate (PAH), the antiviral acyclovir (ACV), and the mycotoxin ochratoxin (OTA), by transporting these exogenous organic anions across the cell membrane in exchange for dicarboxylates such as 2-oxoglutarate. Contributes to the renal uptake of potent uremic toxins (indoxyl sulfate (IS), indole acetate (IA), hippurate/N-benzoylglycine (HA) and 3-carboxy-4-methyl-5-propyl-2-furanpropionate (CMPF)), pravastatin, PCG, E1S and dehydroepiandrosterone sulfate (DHEAS), and is partly involved in the renal uptake of temocaprilat (an angiotensin-converting enzyme (ACE) inhibitor). May contribute to the release of cortisol in the adrenals. Involved in one of the detoxification systems on the choroid plexus (CP), removes substrates such as E1S or taurocholate (TC), PCG, 2,4-D and PAH, from the cerebrospinal fluid (CSF) to the blood for eventual excretion in urine and bile. Also contributes to the uptake of several other organic compounds such as the prostanoids prostaglandin E(2) and prostaglandin F(2-alpha), L-carnitine, and the therapeutic drugs allopurinol, 6-mercaptopurine (6-MP) and 5-fluorouracil (5-FU). Mediates the transport of PAH, PCG, and the statins pravastatin and pitavastatin, from the cerebrum into the blood circulation across the blood-brain barrier (BBB). In summary, plays a role in the efflux of drugs and xenobiotics, helping reduce their undesired toxicological effects on the body. This chain is Organic anion transporter 3 (SLC22A8), found in Pongo abelii (Sumatran orangutan).